Consider the following 450-residue polypeptide: Glucose-6-phosphate isomerase (450 aa).

The residue at position 39 (Thr-39) is a Phosphothreonine. Glu-291 serves as the catalytic Proton donor. Active-site residues include His-312 and Lys-426.

This sequence belongs to the GPI family.

The protein localises to the cytoplasm. The catalysed reaction is alpha-D-glucose 6-phosphate = beta-D-fructose 6-phosphate. The protein operates within carbohydrate biosynthesis; gluconeogenesis. It participates in carbohydrate degradation; glycolysis; D-glyceraldehyde 3-phosphate and glycerone phosphate from D-glucose: step 2/4. Catalyzes the reversible isomerization of glucose-6-phosphate to fructose-6-phosphate. The chain is Glucose-6-phosphate isomerase from Halalkalibacterium halodurans (strain ATCC BAA-125 / DSM 18197 / FERM 7344 / JCM 9153 / C-125) (Bacillus halodurans).